A 503-amino-acid chain; its full sequence is MSEQNHPQTEPQLDENQIIALRREKLNNIRQQRNAYPNDFKRDSFAADLQAQYGEIGKEELDPQAVPVKIAGRMMLKRQMGKASFATIQDVTGQIQLYLNNKGVSQEVLDDFNHWDLGDIVGAEGTLFKTNHGELTVRVSDIRLLSKSLRPLPDKHKGLSDQETKYRQRYVDLIANEESRNTFIKRSQIIQSVRNFMVGEHYLEVETPMMHPIPGGATAKPFVTHHNALDIPLYLRIAPELYLKRLVVGGLERVFEINRSFRNEGMSVRHNPEFTMIEFYEAFSDYERMMQMAEDIIRNASRTVNGTANITYNGKEVDLESPFERLTILEAIKKYNPHYTDEQLNDAEWLKKEIVKHGESLPPSPGIGSLQLALFEGCAEGKLWNPTFIVDYPVEVSPLARASDTKQGLTERFELFVVGRELANGYSELNDPEDQAERFKSQVAQKDAGDDEAMHYDADYIRAMEFGLPPTGGCGIGIDRLVMLLTDLQTIRDVILFPQMRPE.

Mg(2+)-binding residues include Glu-414 and Glu-421.

Belongs to the class-II aminoacyl-tRNA synthetase family. As to quaternary structure, homodimer. Mg(2+) serves as cofactor.

It is found in the cytoplasm. The enzyme catalyses tRNA(Lys) + L-lysine + ATP = L-lysyl-tRNA(Lys) + AMP + diphosphate. This is Lysine--tRNA ligase from Neisseria gonorrhoeae (strain ATCC 700825 / FA 1090).